A 70-amino-acid polypeptide reads, in one-letter code: Cytochrome c oxidase subunit 8B, mitochondrial (70 aa).

A mitochondrion-targeting transit peptide spans 1-24; the sequence is MPRLPPILRLLQAPAKFTVVPKAH. Over 25–38 the chain is Mitochondrial matrix; the sequence is VSAKPAKTPTSAVE. The chain crosses the membrane as a helical span at residues 39-60; it reads QAVGISAIVVGFMVPAGWVLAH. The Mitochondrial intermembrane segment spans residues 61 to 70; it reads LESYKKSSAA.

The protein belongs to the cytochrome c oxidase VIII family. Component of the cytochrome c oxidase (complex IV, CIV), a multisubunit enzyme composed of 14 subunits. The complex is composed of a catalytic core of 3 subunits MT-CO1, MT-CO2 and MT-CO3, encoded in the mitochondrial DNA, and 11 supernumerary subunits COX4I, COX5A, COX5B, COX6A, COX6B, COX6C, COX7A, COX7B, COX7C, COX8 and NDUFA4, which are encoded in the nuclear genome. The complex exists as a monomer or a dimer and forms supercomplexes (SCs) in the inner mitochondrial membrane with NADH-ubiquinone oxidoreductase (complex I, CI) and ubiquinol-cytochrome c oxidoreductase (cytochrome b-c1 complex, complex III, CIII), resulting in different assemblies (supercomplex SCI(1)III(2)IV(1) and megacomplex MCI(2)III(2)IV(2)).

The protein localises to the mitochondrion inner membrane. The protein operates within energy metabolism; oxidative phosphorylation. Functionally, component of the cytochrome c oxidase, the last enzyme in the mitochondrial electron transport chain which drives oxidative phosphorylation. The respiratory chain contains 3 multisubunit complexes succinate dehydrogenase (complex II, CII), ubiquinol-cytochrome c oxidoreductase (cytochrome b-c1 complex, complex III, CIII) and cytochrome c oxidase (complex IV, CIV), that cooperate to transfer electrons derived from NADH and succinate to molecular oxygen, creating an electrochemical gradient over the inner membrane that drives transmembrane transport and the ATP synthase. Cytochrome c oxidase is the component of the respiratory chain that catalyzes the reduction of oxygen to water. Electrons originating from reduced cytochrome c in the intermembrane space (IMS) are transferred via the dinuclear copper A center (CU(A)) of subunit 2 and heme A of subunit 1 to the active site in subunit 1, a binuclear center (BNC) formed by heme A3 and copper B (CU(B)). The BNC reduces molecular oxygen to 2 water molecules using 4 electrons from cytochrome c in the IMS and 4 protons from the mitochondrial matrix. This is Cytochrome c oxidase subunit 8B, mitochondrial (Cox8b) from Mus musculus (Mouse).